A 410-amino-acid chain; its full sequence is Cytochrome P450 monooxygenase mpsF (410 aa).

C355 is a heme binding site.

Belongs to the cytochrome P450 family. Heme serves as cofactor.

Its pathway is secondary metabolite biosynthesis. Its function is as follows. Cytochrome P450 monooxygenase; part of the gene cluster that mediates the biosynthesis of macrophasetins, 3-decalinoyltetramic acids (DTAs) which feature a tetramate (pyrrolidine-2,4-dione) unit connected to a decalin fragment and that have potent bioactivities. The PKS-NRPS mpsA together with its associated enoylreductase partner mpsG incorporate one unit of acetyl-CoA, seven units of malonyl-CoA, and one unit of L-alanine to assemble the linear tetramic acid intermediate corresponding to the backbone of macrophasetins. Without the Diels-Alderase mpsD, the mpsA/G product can undergo the non-enzymatic intramolecular Diels-Alder (IMDA) reaction to generate both macrophasetin A and macrophasetin B. Catalyzed by mpsD, the linear tetramic acid intermediate is thoroughly converted to macrophasetin A via the endo-IMDA reaction in a regioselective and stereoselective manner. Finally, the cytochrome P450 monooxygenase mpsF catalyzes the hydroxylation at C20 to yield the end product macrophasetin C. This chain is Cytochrome P450 monooxygenase mpsF, found in Macrophomina phaseolina (strain MS6) (Charcoal rot fungus).